A 635-amino-acid chain; its full sequence is Chaperone protein DnaK (635 aa).

T198 carries the phosphothreonine; by autocatalysis modification. The segment at 598–635 (YAKAQPGEEQAGGAPHEGEAKDEKVVDADFEEVKEDKK) is disordered. Positions 613–624 (HEGEAKDEKVVD) are enriched in basic and acidic residues. Over residues 625–635 (ADFEEVKEDKK) the composition is skewed to acidic residues.

It belongs to the heat shock protein 70 family.

In terms of biological role, acts as a chaperone. This Geotalea uraniireducens (strain Rf4) (Geobacter uraniireducens) protein is Chaperone protein DnaK.